The chain runs to 417 residues: Probable serine/threonine-protein kinase WNK9 (417 aa).

The interval 1–23 (MDLVEAEAEEQPPDEDGDEEGYV) is disordered. One can recognise a Protein kinase domain in the interval 32-289 (IRYDEIVGSG…ATELLKSSFL (258 aa)). Residues 113 to 116 (TELF) and K163 each bind ATP. The active-site Proton acceptor is the D180.

The protein belongs to the protein kinase superfamily. Ser/Thr protein kinase family. WNK subfamily.

The enzyme catalyses L-seryl-[protein] + ATP = O-phospho-L-seryl-[protein] + ADP + H(+). It carries out the reaction L-threonyl-[protein] + ATP = O-phospho-L-threonyl-[protein] + ADP + H(+). The chain is Probable serine/threonine-protein kinase WNK9 (WNK9) from Oryza sativa subsp. japonica (Rice).